The sequence spans 578 residues: Protein BONZAI 1 (578 aa).

Residue Gly2 is the site of N-myristoyl glycine attachment. 2 consecutive C2 domains span residues 26 to 163 (ALGA…TSTL) and 176 to 303 (QPHH…NFSL). Positions 63, 69, 122, and 124 each coordinate Ca(2+). The region spanning 341-560 (NFMVAIDFTA…SVVQALLAEL (220 aa)) is the VWFA domain.

This sequence belongs to the copine family. Interacts (via VWA domain) with BAP1 and BAP2. Interacts with HSP70-1 and HSP70-2. Ca(2+) serves as cofactor. Post-translationally, based on mass spectrometry analysis, the N-peptide must be modified and there might be additional modifications other than myristoylation. As to expression, expressed in roots and flowers and, at higher levels, in leaves and stems. Strongly expressed in growing tissues. Not detected in green siliques.

It is found in the cell membrane. Its function is as follows. Negative regulator of cell death and defense responses. Negative regulator of several R genes, including SNC1. May have effects in promoting growth and development. May function in membrane trafficking and in fusion of vesicles with plasma membrane at low temperature. Exhibits calcium-dependent phospholipid binding properties. The polypeptide is Protein BONZAI 1 (BON1) (Arabidopsis thaliana (Mouse-ear cress)).